The following is a 153-amino-acid chain: 6,7-dimethyl-8-ribityllumazine synthase (153 aa).

Residues W22, 56 to 58 (SYE), and 80 to 82 (AVI) contribute to the 5-amino-6-(D-ribitylamino)uracil site. 85–86 (AT) contributes to the (2S)-2-hydroxy-3-oxobutyl phosphate binding site. The Proton donor role is filled by H88. Residue L113 coordinates 5-amino-6-(D-ribitylamino)uracil. R127 lines the (2S)-2-hydroxy-3-oxobutyl phosphate pocket.

The protein belongs to the DMRL synthase family.

It carries out the reaction (2S)-2-hydroxy-3-oxobutyl phosphate + 5-amino-6-(D-ribitylamino)uracil = 6,7-dimethyl-8-(1-D-ribityl)lumazine + phosphate + 2 H2O + H(+). It participates in cofactor biosynthesis; riboflavin biosynthesis; riboflavin from 2-hydroxy-3-oxobutyl phosphate and 5-amino-6-(D-ribitylamino)uracil: step 1/2. Its function is as follows. Catalyzes the formation of 6,7-dimethyl-8-ribityllumazine by condensation of 5-amino-6-(D-ribitylamino)uracil with 3,4-dihydroxy-2-butanone 4-phosphate. This is the penultimate step in the biosynthesis of riboflavin. The protein is 6,7-dimethyl-8-ribityllumazine synthase of Herpetosiphon aurantiacus (strain ATCC 23779 / DSM 785 / 114-95).